A 473-amino-acid chain; its full sequence is Vasculin-like protein 1 (473 aa).

A compositionally biased stretch (polar residues) spans 14–25; sequence STPQSSKSSTAT. The disordered stretch occupies residues 14-55; sequence STPQSSKSSTATFDKHGEHLSRGEGRFGISRRRHNSSDGFFN. A compositionally biased stretch (basic and acidic residues) spans 26–38; that stretch reads FDKHGEHLSRGEG. A phosphoserine mark is found at serine 49 and serine 76. Disordered stretches follow at residues 88-127 and 155-189; these read GTTGWHGSSRGHDGMSQRSGGSSTGNHRHWNGSFHSRKGC and DFPSLNPEAGKQNQPCRPVGTPSGVWENPPSAKQP. Polar residues predominate over residues 103 to 112; sequence SQRSGGSSTG. Basic residues predominate over residues 113–125; the sequence is NHRHWNGSFHSRK. Residue serine 199 is modified to Phosphoserine. Disordered regions lie at residues 235–267 and 281–316; these read LVPKPAPPPSKPNAWKANRTEHKPGSLCSSRES and LAAGAGLHSPKESPSSTTPPIEISSSRLTKLTRRTT. Serine 289 carries the phosphoserine modification. The segment covering 292-309 has biased composition (low complexity); the sequence is ESPSSTTPPIEISSSRLT. A Phosphothreonine modification is found at threonine 298. The residue at position 381 (serine 381) is a Phosphoserine. Residues 453–473 form a disordered region; the sequence is ECEDSDSETSSSQTSDDDAWK.

This sequence belongs to the vasculin family.

The protein localises to the nucleus. Possible transcription factor. This is Vasculin-like protein 1 (Gpbp1l1) from Mus musculus (Mouse).